Here is a 298-residue protein sequence, read N- to C-terminus: tRNA dimethylallyltransferase (298 aa).

10-17 contributes to the ATP binding site; the sequence is GATATGKS. 12–17 contacts substrate; sequence TATGKS. An interaction with substrate tRNA region spans residues 35-38; sequence DSRQ.

The protein belongs to the IPP transferase family. As to quaternary structure, monomer. The cofactor is Mg(2+).

The catalysed reaction is adenosine(37) in tRNA + dimethylallyl diphosphate = N(6)-dimethylallyladenosine(37) in tRNA + diphosphate. Catalyzes the transfer of a dimethylallyl group onto the adenine at position 37 in tRNAs that read codons beginning with uridine, leading to the formation of N6-(dimethylallyl)adenosine (i(6)A). The protein is tRNA dimethylallyltransferase of Picosynechococcus sp. (strain ATCC 27264 / PCC 7002 / PR-6) (Agmenellum quadruplicatum).